The chain runs to 222 residues: Deoxyribose-phosphate aldolase (222 aa).

Catalysis depends on Asp-91, which acts as the Proton donor/acceptor. Lys-153 acts as the Schiff-base intermediate with acetaldehyde in catalysis. Lys-182 (proton donor/acceptor) is an active-site residue.

It belongs to the DeoC/FbaB aldolase family. DeoC type 1 subfamily.

It localises to the cytoplasm. The enzyme catalyses 2-deoxy-D-ribose 5-phosphate = D-glyceraldehyde 3-phosphate + acetaldehyde. It functions in the pathway carbohydrate degradation; 2-deoxy-D-ribose 1-phosphate degradation; D-glyceraldehyde 3-phosphate and acetaldehyde from 2-deoxy-alpha-D-ribose 1-phosphate: step 2/2. Functionally, catalyzes a reversible aldol reaction between acetaldehyde and D-glyceraldehyde 3-phosphate to generate 2-deoxy-D-ribose 5-phosphate. The sequence is that of Deoxyribose-phosphate aldolase from Mycoplasma capricolum subsp. capricolum (strain California kid / ATCC 27343 / NCTC 10154).